We begin with the raw amino-acid sequence, 111 residues long: Universal stress protein B (111 aa).

A run of 2 helical transmembrane segments spans residues 1-21 (MIST…NMAR) and 90-110 (FILT…LAIW).

The protein belongs to the universal stress protein B family.

It is found in the cell inner membrane. This chain is Universal stress protein B, found in Erwinia tasmaniensis (strain DSM 17950 / CFBP 7177 / CIP 109463 / NCPPB 4357 / Et1/99).